Consider the following 478-residue polypeptide: Solute carrier family 49 member 4 (478 aa).

Residues 1-27 (MGSGWSSEEEERQPLLGPGLGPAPGAA) form a disordered region. Over 1–51 (MGSGWSSEEEERQPLLGPGLGPAPGAARRGREATAVLPAAGPNPGRVYGRR) the chain is Cytoplasmic. Residues 15 to 16 (LL) carry the Di-leucine motif; mediates lysosomal localization motif. A helical transmembrane segment spans residues 52–72 (WLVLLLFSLLAFAQGLVWNTW). Topologically, residues 73 to 89 (GPIQNSARQAYGFSGWD) are lumenal. Residues 90–110 (IALLVLWGPIGFLPCFAFMWL) form a helical membrane-spanning segment. Residues 111–117 (LDKRGLR) are Cytoplasmic-facing. Residues 118 to 138 (VTVLLTSFLMVLGTGLRCIPV) traverse the membrane as a helical segment. The Lumenal portion of the chain corresponds to 139-152 (SDLALKKRLIHGGQ). The helical transmembrane segment at 153 to 173 (ILNGLAGPTVMNAAPFLSTTW) threads the bilayer. Residues 174 to 184 (FSADERATATA) are Cytoplasmic-facing. The helical transmembrane segment at 185-205 (IASMLSYLGGACAFLVGPLVV) threads the bilayer. Over 206 to 229 (PAPNGTAPLLAAESSRAHIKDRIE) the chain is Lumenal. An N-linked (GlcNAc...) asparagine glycan is attached at N209. The helical transmembrane segment at 230–250 (TVLYAEFGVVCLIFSATLAYF) threads the bilayer. At 251–281 (PPRPPLPPSVAAASQRLSYRRSFCRLLSNLR) the chain is on the cytoplasmic side. Residues 282–302 (FLMIALAYAIPLGVFAGWSGV) form a helical membrane-spanning segment. Topologically, residues 303–314 (LDLILTPVHVSQ) are lumenal. The chain crosses the membrane as a helical span at residues 315–335 (VDAGWIGFWSIVGGCVVGIAM). Over 336–347 (ARFADFIRGMLK) the chain is Cytoplasmic. The chain crosses the membrane as a helical span at residues 348 to 368 (LILLLLFSGATLSSTWFTLTC). The Lumenal portion of the chain corresponds to 369–384 (LNSITHLPLTTVTLYA). The chain crosses the membrane as a helical span at residues 385–405 (SCILLGVFLNSSVPIFFELFV). The Cytoplasmic segment spans residues 406–414 (ETVYPVPEG). A helical membrane pass occupies residues 415–435 (ITCGVVTFLSNMFMGVLLFFV). Residues 436–442 (TFYHTEL) lie on the Lumenal side of the membrane. Residues 443–463 (SWFNWCLPGSCLLSLLLILCF) form a helical membrane-spanning segment. The Cytoplasmic portion of the chain corresponds to 464–478 (RESYDRLYLDVVVSV).

Belongs to the major facilitator superfamily. Cleaved in lysosomes by cathepsin L between Leu-214 and Ala-261, generating a N-glycosylated N-terminal and a non-glycosylated C-terminal fragment.

The protein localises to the lysosome membrane. The enzyme catalyses pyridoxine(out) + n H(+)(out) = pyridoxine(in) + n H(+)(in). In terms of biological role, mediates H(+)-dependent pyridoxine transport. The polypeptide is Solute carrier family 49 member 4 (Slc49a4) (Mus musculus (Mouse)).